Here is a 234-residue protein sequence, read N- to C-terminus: Triosephosphate isomerase (234 aa).

8 to 10 (NFK) serves as a coordination point for substrate. His-90 (electrophile) is an active-site residue. Glu-159 functions as the Proton acceptor in the catalytic mechanism. Substrate-binding residues include Gly-165 and Ser-197.

Belongs to the triosephosphate isomerase family. Homodimer.

The protein localises to the cytoplasm. It carries out the reaction D-glyceraldehyde 3-phosphate = dihydroxyacetone phosphate. It functions in the pathway carbohydrate biosynthesis; gluconeogenesis. Its pathway is carbohydrate degradation; glycolysis; D-glyceraldehyde 3-phosphate from glycerone phosphate: step 1/1. In terms of biological role, involved in the gluconeogenesis. Catalyzes stereospecifically the conversion of dihydroxyacetone phosphate (DHAP) to D-glyceraldehyde-3-phosphate (G3P). This is Triosephosphate isomerase from Helicobacter acinonychis (strain Sheeba).